The following is a 612-amino-acid chain: Dihydroxy-acid dehydratase (612 aa).

Asp81 contacts Mg(2+). Residue Cys122 participates in [2Fe-2S] cluster binding. Residues Asp123 and Lys124 each contribute to the Mg(2+) site. An N6-carboxylysine modification is found at Lys124. A [2Fe-2S] cluster-binding site is contributed by Cys193. Residue Glu489 participates in Mg(2+) binding. The active-site Proton acceptor is the Ser515.

This sequence belongs to the IlvD/Edd family. In terms of assembly, homodimer. Requires [2Fe-2S] cluster as cofactor. Mg(2+) is required as a cofactor.

It catalyses the reaction (2R)-2,3-dihydroxy-3-methylbutanoate = 3-methyl-2-oxobutanoate + H2O. The catalysed reaction is (2R,3R)-2,3-dihydroxy-3-methylpentanoate = (S)-3-methyl-2-oxopentanoate + H2O. It participates in amino-acid biosynthesis; L-isoleucine biosynthesis; L-isoleucine from 2-oxobutanoate: step 3/4. Its pathway is amino-acid biosynthesis; L-valine biosynthesis; L-valine from pyruvate: step 3/4. Functionally, functions in the biosynthesis of branched-chain amino acids. Catalyzes the dehydration of (2R,3R)-2,3-dihydroxy-3-methylpentanoate (2,3-dihydroxy-3-methylvalerate) into 2-oxo-3-methylpentanoate (2-oxo-3-methylvalerate) and of (2R)-2,3-dihydroxy-3-methylbutanoate (2,3-dihydroxyisovalerate) into 2-oxo-3-methylbutanoate (2-oxoisovalerate), the penultimate precursor to L-isoleucine and L-valine, respectively. The sequence is that of Dihydroxy-acid dehydratase from Teredinibacter turnerae (strain ATCC 39867 / T7901).